A 127-amino-acid chain; its full sequence is Fluoride-specific ion channel FluC (127 aa).

The next 4 membrane-spanning stretches (helical) occupy residues 4-24 (SILA…FLGL), 36-56 (GTLL…AYFA), 68-88 (LIIT…AEVV), and 99-119 (AAGA…LGLF). G75 and T78 together coordinate Na(+).

The protein belongs to the fluoride channel Fluc/FEX (TC 1.A.43) family.

Its subcellular location is the cell inner membrane. It catalyses the reaction fluoride(in) = fluoride(out). With respect to regulation, na(+) is not transported, but it plays an essential structural role and its presence is essential for fluoride channel function. Functionally, fluoride-specific ion channel. Important for reducing fluoride concentration in the cell, thus reducing its toxicity. The chain is Fluoride-specific ion channel FluC from Pseudomonas aeruginosa (strain UCBPP-PA14).